The following is a 402-amino-acid chain: S-adenosylmethionine synthase (402 aa).

Residue His-16 coordinates ATP. Asp-18 contacts Mg(2+). Glu-44 contacts K(+). L-methionine contacts are provided by Glu-57 and Gln-103. Residues 103-113 (QSPDIAQGVDT) are flexible loop. ATP contacts are provided by residues 178 to 180 (DGK), 249 to 250 (KF), Asp-258, 264 to 265 (RK), Ala-281, and Lys-285. An L-methionine-binding site is contributed by Asp-258. L-methionine is bound at residue Lys-289.

Belongs to the AdoMet synthase family. Homotetramer; dimer of dimers. It depends on Mg(2+) as a cofactor. The cofactor is K(+).

Its subcellular location is the cytoplasm. It carries out the reaction L-methionine + ATP + H2O = S-adenosyl-L-methionine + phosphate + diphosphate. The protein operates within amino-acid biosynthesis; S-adenosyl-L-methionine biosynthesis; S-adenosyl-L-methionine from L-methionine: step 1/1. Functionally, catalyzes the formation of S-adenosylmethionine (AdoMet) from methionine and ATP. The overall synthetic reaction is composed of two sequential steps, AdoMet formation and the subsequent tripolyphosphate hydrolysis which occurs prior to release of AdoMet from the enzyme. The chain is S-adenosylmethionine synthase from Mycolicibacterium gilvum (strain PYR-GCK) (Mycobacterium gilvum (strain PYR-GCK)).